Consider the following 1527-residue polypeptide: Peroxidasin (1527 aa).

The first 23 residues, 1–23 (MRFMLLMLQLLGLLLLLAGGVQS), serve as a signal peptide directing secretion. The LRRNT domain occupies 24–53 (VYCPAGCTCLERTVRCIRAKLSAVPKLPQD). LRR repeat units lie at residues 51–74 (PQDT…AFSG), 75–98 (LAQL…ALNG), 99–122 (LTAL…IFQR), 124–146 (PRLE…LFDN), 147–170 (LPRL…GFNR), and 172–196 (NNLK…LWRR). Ig-like C2-type domains lie at 236 to 322 (PQFL…QPVR), 365 to 453 (PHFT…ARIE), 458 to 545 (PEIL…ATIK), and 553 to 643 (PQLA…ALVT). 4 disulfide bridges follow: Cys257–Cys307, Cys388–Cys437, Cys479–Cys529, and Cys574–Cys627. Residue Asn419 is glycosylated (N-linked (GlcNAc...) asparagine). N-linked (GlcNAc...) asparagine glycosylation is found at Asn616, Asn673, Asn682, Asn731, and Asn767. Cys768 and Cys784 are joined by a disulfide. Heme b is bound at residue Asp862. Residue His863 is the Proton acceptor of the active site. Asp864 serves as a coordination point for Ca(2+). Disulfide bonds link Cys882–Cys892 and Cys886–Cys909. Positions 941, 943, 945, and 947 each coordinate Ca(2+). Asn962 is a glycosylation site (N-linked (GlcNAc...) asparagine). An intrachain disulfide couples Cys994 to Cys1005. Residues Glu1015 and His1109 each contribute to the heme b site. Residues Asn1120 and Asn1213 are each glycosylated (N-linked (GlcNAc...) asparagine). 2 cysteine pairs are disulfide-bonded: Cys1212-Cys1269 and Cys1310-Cys1336. Residues 1403–1441 (NEERVSGLEELIGSFQKELKKLHKKLRKLEDSCNSADSE) adopt a coiled-coil conformation. One can recognise a VWFC domain in the interval 1463 to 1524 (SHCVDDKGTT…PPEACCPHCP (62 aa)).

It belongs to the peroxidase family. XPO subfamily. Homotrimer; disulfide-linked. Requires Ca(2+) as cofactor. The cofactor is heme b. In terms of tissue distribution, expressed in hemocytes. Also expressed in the fat body and gastric caeca.

The protein resides in the secreted. It catalyses the reaction (5R)-5-hydroxy-L-lysyl-[collagen] + L-methionyl-[collagen] + H2O2 = [collagen]-(5R)-5-hydroxy-L-lysyl-N-S-L-methionyl-[collagen] + 2 H2O + H(+). It carries out the reaction bromide + H2O2 = hypobromite + H2O. The catalysed reaction is (5R)-5-hydroxy-L-lysyl-[collagen] + L-methionyl-[collagen] + hypobromite = [collagen]-(5R)-5-hydroxy-L-lysyl-N-S-L-methionyl-[collagen] + bromide + H2O + H(+). The enzyme catalyses L-lysyl-[collagen] + L-methionyl-[collagen] + H2O2 = [collagen]-L-lysyl-N-S-L-methionyl-[collagen] + 2 H2O + H(+). It catalyses the reaction L-lysyl-[collagen] + L-methionyl-[collagen] + hypobromite = [collagen]-L-lysyl-N-S-L-methionyl-[collagen] + bromide + H2O + H(+). It carries out the reaction L-tyrosyl-[protein] + bromide + H2O2 + H(+) = 3-bromo-L-tyrosyl-[protein] + 2 H2O. The catalysed reaction is hypobromite + L-tyrosyl-[protein] + H(+) = 3-bromo-L-tyrosyl-[protein] + H2O. In terms of biological role, catalyzes the two-electron oxidation of bromide by hydrogen peroxide and generates hypobromite as a reactive intermediate which mediates the formation of sulfilimine cross-links between methionine and hydroxylysine residues within an uncross-linked collagen IV NC1 hexamer. Plays a role in extracellular matrix consolidation, phagocytosis and defense. The chain is Peroxidasin from Drosophila melanogaster (Fruit fly).